Consider the following 107-residue polypeptide: uncharacterized protein (107 aa).

Positions 1 to 34 are cleaved as a signal peptide; sequence MRLQWPKFITFLSTGSCCLLFLLLPCSFFPLPTA.

This is an uncharacterized protein from Saccharomyces cerevisiae (strain ATCC 204508 / S288c) (Baker's yeast).